The primary structure comprises 72 residues: Translational regulator CsrA (72 aa).

Belongs to the CsrA/RsmA family. Homodimer; the beta-strands of each monomer intercalate to form a hydrophobic core, while the alpha-helices form wings that extend away from the core.

Its subcellular location is the cytoplasm. Functionally, a translational regulator that binds mRNA to regulate translation initiation and/or mRNA stability. Usually binds in the 5'-UTR at or near the Shine-Dalgarno sequence preventing ribosome-binding, thus repressing translation. Its main target seems to be the major flagellin gene, while its function is anatagonized by FliW. The polypeptide is Translational regulator CsrA (Clostridium botulinum (strain Loch Maree / Type A3)).